The following is a 151-amino-acid chain: Histone H2A.2.1 (151 aa).

M1 is modified (N-acetylmethionine). 2 disordered regions span residues 1-22 and 129-151; these read MDGS…KKSV and EKAE…PKKA. 2 short sequence motifs (SPKK motif) span residues 140–143 and 147–150; these read SPKK. The segment covering 140-151 has biased composition (basic residues); it reads SPKKTTKSPKKA.

The protein belongs to the histone H2A family. As to quaternary structure, the nucleosome is a histone octamer containing two molecules each of H2A, H2B, H3 and H4 assembled in one H3-H4 heterotetramer and two H2A-H2B heterodimers. The octamer wraps approximately 147 bp of DNA. Phosphorylated within its C-terminal part, probably at the SPKK motifs.

It is found in the nucleus. Its subcellular location is the chromosome. Core component of nucleosome. Nucleosomes wrap and compact DNA into chromatin, limiting DNA accessibility to the cellular machineries which require DNA as a template. Histones thereby play a central role in transcription regulation, DNA repair, DNA replication and chromosomal stability. DNA accessibility is regulated via a complex set of post-translational modifications of histones, also called histone code, and nucleosome remodeling. The polypeptide is Histone H2A.2.1 (Triticum aestivum (Wheat)).